Here is a 415-residue protein sequence, read N- to C-terminus: Mitochondrial tRNA-specific 2-thiouridylase 1 (415 aa).

ATP contacts are provided by residues 37–44 and methionine 63; that span reads AMSGGVDS. The tract at residues 124-126 is interaction with target base in tRNA; it reads NPD. Cysteine 129 serves as the catalytic Nucleophile. Cysteines 129 and 234 form a disulfide. Glycine 159 contributes to the ATP binding site. An interaction with tRNA region spans residues 183–185; that stretch reads KDQ. Cysteine 234 (cysteine persulfide intermediate) is an active-site residue. Positions 356–357 are interaction with tRNA; sequence RH.

This sequence belongs to the MnmA/TRMU family.

It is found in the mitochondrion. The catalysed reaction is 5-taurinomethyluridine(34) in tRNA + S-sulfanyl-L-cysteinyl-[protein] + AH2 + ATP = 5-taurinomethyl-2-thiouridine(34) in tRNA + L-cysteinyl-[protein] + A + AMP + diphosphate + H(+). Its function is as follows. Catalyzes the 2-thiolation of uridine at the wobble position (U34) of mitochondrial tRNA(Lys), tRNA(Glu) and tRNA(Gln). Required for the formation of 5-taurinomethyl-2-thiouridine (tm5s2U) of mitochondrial tRNA(Lys), tRNA(Glu), and tRNA(Gln) at the wobble position. ATP is required to activate the C2 atom of the wobble base. This is Mitochondrial tRNA-specific 2-thiouridylase 1 from Schizosaccharomyces pombe (strain 972 / ATCC 24843) (Fission yeast).